The sequence spans 201 residues: Large ribosomal subunit protein uL4 (201 aa).

The disordered stretch occupies residues 43–71 (TRAQKTRSDVSGGGKKPWRQKGTGRARSG).

Belongs to the universal ribosomal protein uL4 family. In terms of assembly, part of the 50S ribosomal subunit.

Its function is as follows. One of the primary rRNA binding proteins, this protein initially binds near the 5'-end of the 23S rRNA. It is important during the early stages of 50S assembly. It makes multiple contacts with different domains of the 23S rRNA in the assembled 50S subunit and ribosome. Forms part of the polypeptide exit tunnel. This is Large ribosomal subunit protein uL4 from Psychromonas ingrahamii (strain DSM 17664 / CCUG 51855 / 37).